A 518-amino-acid polypeptide reads, in one-letter code: MHKDNDSGSGSNPGQVSNYLIVRPHRGGYIDLFRYGVRDDQTSKAKFLEMPDNREWSTITIDEEAEDHRWVIVVSILVRKIIRLLRTPMEFTGFVVDFFLNLFSANGGFFGLLLRLIQAKVVIPERGSVTFVSTIGQLDGRISLYKEWNFVEHLEGIDSVDSGRVKIELGSRGLMDLCVMASKLAYENAKVVENVVDLHWKMNLVEFLDCWNDYQKQMSTQVFVFTDKQKDANLIVISFRGTEPFDADDWGTDFDYSWYEVPNVGKLHMGFLEAMGLGNRDDTTTFHYNLFEQTSSEEENSKKNLLDMVERSAYYAVRVILKRLLSEHENARFVVTGHSLGGALAILFPTLLVLNEETEIMKRLLGVYTFGQPRIGNREVGLFMKAQLNQPVDRYFRVVYCNDIVPRLPYDDKTFLYKHFGLCLFYDSFYNETKAEDEPDPNPYGLRYKILGHVIAVWELVRGLTMGYTHGPDYKEGWFRILFRLMGLVIPGLSDHCMTDYVNSVRLGPDNELQMSSL.

A helical membrane pass occupies residues 93–113 (GFVVDFFLNLFSANGGFFGLL). Residues 337-341 (GHSLG) carry the GXSXG motif. Serine 339 (nucleophile) is an active-site residue. Catalysis depends on charge relay system residues aspartate 403 and histidine 496.

Belongs to the AB hydrolase superfamily. Lipase family. As to expression, expressed in pollen grains, pollen tubes, developing embryos, developing seeds and germinating seeds.

It localises to the lipid droplet. The protein localises to the membrane. It carries out the reaction 1,2-di-(9Z-octadecenoyl)-glycerol + (9Z)-octadecenoate + H(+) = 1,2,3-tri-(9Z-octadecenoyl)-glycerol + H2O. The catalysed reaction is 1-(9Z-octadecenoyl)-glycerol + H2O = glycerol + (9Z)-octadecenoate + H(+). Its function is as follows. Acid lipase that can hydrolyze a range of triacylglycerols without a clear preference for acyl-chains. Can also cleave 1,2-diacylglycerol, 1,3-diacylglycerol and 1-monoacylglycerol, but not phosphatidylcholine, phosphatidylethanolamine, or sterol esters. Required for pollen tube growth. Triacylglycerol hydrolysis by OBL1 may provide acyl groups for the synthesis of membrane lipids in growing pollen tubes. The polypeptide is Triacylglycerol lipase OBL1 (Arabidopsis thaliana (Mouse-ear cress)).